Consider the following 67-residue polypeptide: Putative ATP synthase subunit epsilon, mitochondrial (67 aa).

Belongs to the eukaryotic ATPase epsilon family. As to quaternary structure, F-type ATPases have 2 components, CF(1) - the catalytic core - and CF(0) - the membrane proton channel. CF(1) has five subunits: alpha(3), beta(3), gamma(1), delta(1), epsilon(1). CF(0) seems to have nine subunits: a, b, c, d, e, f, g, F6 and 8 (or A6L).

It is found in the mitochondrion. It localises to the mitochondrion inner membrane. Its function is as follows. Mitochondrial membrane ATP synthase (F(1)F(0) ATP synthase or Complex V) produces ATP from ADP in the presence of a proton gradient across the membrane which is generated by electron transport complexes of the respiratory chain. F-type ATPases consist of two structural domains, F(1) - containing the extramembraneous catalytic core, and F(0) - containing the membrane proton channel, linked together by a central stalk and a peripheral stalk. During catalysis, ATP synthesis in the catalytic domain of F(1) is coupled via a rotary mechanism of the central stalk subunits to proton translocation. Part of the complex F(1) domain and of the central stalk which is part of the complex rotary element. Rotation of the central stalk against the surrounding alpha(3)beta(3) subunits leads to hydrolysis of ATP in three separate catalytic sites on the beta subunits. In Schizosaccharomyces pombe (strain 972 / ATCC 24843) (Fission yeast), this protein is Putative ATP synthase subunit epsilon, mitochondrial (atp15).